Reading from the N-terminus, the 456-residue chain is Histidine--tRNA ligase (456 aa).

The protein belongs to the class-II aminoacyl-tRNA synthetase family. In terms of assembly, homodimer.

The protein localises to the cytoplasm. The enzyme catalyses tRNA(His) + L-histidine + ATP = L-histidyl-tRNA(His) + AMP + diphosphate + H(+). In Christiangramia forsetii (strain DSM 17595 / CGMCC 1.15422 / KT0803) (Gramella forsetii), this protein is Histidine--tRNA ligase.